The following is a 1251-amino-acid chain: Phospholipid-transporting ATPase IC (1251 aa).

The disordered stretch occupies residues 1-52; the sequence is MSTERDSETTFDEESQPNDEVVPYSDDETEDELEDQGSTVEPEQNRVNREAE. Topologically, residues 1-121 are cytoplasmic; it reads MSTERDSETT…LFEQFKRAAN (121 aa). Over residues 25–35 the composition is skewed to acidic residues; that stretch reads SDDETEDELED. Over residues 43 to 52 the composition is skewed to basic and acidic residues; it reads EQNRVNREAE. A helical membrane pass occupies residues 122 to 142; it reads FYFLILLILQAIPQISTLAWY. Topologically, residues 143–144 are exoplasmic loop; that stretch reads TT. A helical membrane pass occupies residues 145 to 165; it reads LVPLLLVLGITAIKDLVDDVA. Residues 166 to 339 lie on the Cytoplasmic side of the membrane; that stretch reads RHKMDKEINN…RTKIDYLMNY (174 aa). A helical membrane pass occupies residues 340–360; that stretch reads MVYTIFIVLILVSAGLAIGHA. Residues 361 to 385 are Exoplasmic loop-facing; it reads YWEAQVGNYSWYLYDGENATPSYRG. The helical transmembrane segment at 386–406 threads the bilayer; sequence FLNFWGYIIVLNTMVPISLYV. The Cytoplasmic segment spans residues 407–952; that stretch reads SVEVIRLGQS…SYIRMCKFLR (546 aa). Asp-454 serves as the catalytic 4-aspartylphosphate intermediate. Residues Asp-454, Lys-455, Thr-456, Glu-555, Phe-596, Lys-619, Arg-652, Thr-732, Gly-733, Asp-734, Arg-867, and Lys-873 each contribute to the ATP site. Position 454 (Asp-454) interacts with Mg(2+). Thr-456 serves as a coordination point for Mg(2+). Mg(2+) is bound at residue Asp-893. The ATP site is built by Asn-896 and Asp-897. Asp-897 is a binding site for Mg(2+). Residues 953 to 973 traverse the membrane as a helical segment; it reads YFFYKNFAFTLVHFWYSFFNG. Over 974 to 982 the chain is Exoplasmic loop; sequence YSAQTAYED. A helical transmembrane segment spans residues 983–1003; that stretch reads WFITLYNVLYSSLPVLLMGLL. Over 1004–1032 the chain is Cytoplasmic; sequence DQDVSDKLSLRFPGLYVVGQRDLLFNYKR. Residues 1033–1053 traverse the membrane as a helical segment; that stretch reads FFVSLLHGVLTSMVLFFIPLG. The Exoplasmic loop segment spans residues 1054 to 1071; the sequence is AYLQTVGQDGEAPSDYQS. Residues 1072-1092 form a helical membrane-spanning segment; sequence FAVTVASALVITVNFQIGLDT. Residues 1093 to 1094 are Cytoplasmic-facing; sequence SY. Residues 1095–1115 traverse the membrane as a helical segment; sequence WTFVNAFSIFGSIALYFGIMF. Topologically, residues 1116–1142 are exoplasmic loop; it reads DFHSAGIHVLFPSAFQFTGTASNALRQ. The chain crosses the membrane as a helical span at residues 1143 to 1163; sequence PYIWLTIILTVAVCLLPVVAI. Over 1164–1251 the chain is Cytoplasmic; the sequence is RFLSMTIWPS…TAEYRRTVES (88 aa). Ser-1223 bears the Phosphoserine mark.

It belongs to the cation transport ATPase (P-type) (TC 3.A.3) family. Type IV subfamily. Component of a P4-ATPase flippase complex which consists of a catalytic alpha subunit ATP8B1 and an accessory beta subunit TMEM30A. The flippase ATP8B1:TMEM30A complex can form an intermediate phosphoenzyme in vitro. Also interacts with beta subunit TMEM30B. Mg(2+) is required as a cofactor. Hepatocytes, bile duct, intestinal epithelial cells (cholangiocytes and ileocytes), and pancreatic acinar cells.

The protein resides in the cell membrane. It is found in the apical cell membrane. Its subcellular location is the cell projection. It localises to the stereocilium. The protein localises to the endoplasmic reticulum. The protein resides in the golgi apparatus. The enzyme catalyses ATP + H2O + phospholipidSide 1 = ADP + phosphate + phospholipidSide 2.. It carries out the reaction a 1,2-diacyl-sn-glycero-3-phosphocholine(out) + ATP + H2O = a 1,2-diacyl-sn-glycero-3-phosphocholine(in) + ADP + phosphate + H(+). It catalyses the reaction a 1,2-diacyl-sn-glycero-3-phospho-L-serine(out) + ATP + H2O = a 1,2-diacyl-sn-glycero-3-phospho-L-serine(in) + ADP + phosphate + H(+). Its function is as follows. Catalytic component of a P4-ATPase flippase complex which catalyzes the hydrolysis of ATP coupled to the transport of phospholipids, in particular phosphatidylcholines (PC), from the outer to the inner leaflet of the plasma membrane. May participate in the establishment of the canalicular membrane integrity by ensuring asymmetric distribution of phospholipids in the canicular membrane. Thus may have a role in the regulation of bile acids transport into the canaliculus, uptake of bile acids from intestinal contents into intestinal mucosa or both and protect hepatocytes from bile salts. Involved in the microvillus formation in polarized epithelial cells; the function seems to be independent from its flippase activity. Participates in correct apical membrane localization of CDC42, CFTR and SLC10A2. Enables CDC42 clustering at the apical membrane during enterocyte polarization through the interaction between CDC42 polybasic region and negatively charged membrane lipids provided by ATP8B1. Together with TMEM30A is involved in uptake of the synthetic drug alkylphospholipid perifosine. Required for the preservation of cochlear hair cells in the inner ear. According PubMed:20852622 is proposed to act as cardiolipin transporter during inflammatory injury; the function is questioned by PubMed:21475228. This chain is Phospholipid-transporting ATPase IC, found in Mus musculus (Mouse).